We begin with the raw amino-acid sequence, 318 residues long: Large ribosomal subunit protein uL10 (318 aa).

Y24 is subject to Phosphotyrosine. Phosphothreonine is present on T59. Residue K264 forms a Glycyl lysine isopeptide (Lys-Gly) (interchain with G-Cter in ubiquitin) linkage. A Glycyl lysine isopeptide (Lys-Gly) (interchain with G-Cter in SUMO1); alternate cross-link involves residue K298. K298 participates in a covalent cross-link: Glycyl lysine isopeptide (Lys-Gly) (interchain with G-Cter in SUMO2); alternate. Positions 298–318 (KVEAKEESEESDEDMGFGLFD) are disordered. The segment covering 303–312 (EESEESDEDM) has biased composition (acidic residues). A phosphoserine mark is found at S305 and S308.

It belongs to the universal ribosomal protein uL10 family. In terms of assembly, P0 forms a pentameric complex by interaction with dimers of P1 and P2. Identified in a IGF2BP1-dependent mRNP granule complex containing untranslated mRNAs. Interacts with APEX1. Interacts with FMR1 isoform 6. In terms of processing, ubiquitinated at Lys-264 by RNF14 and RNF25 in response to ribosome collisions (ribosome stalling).

The protein localises to the nucleus. It localises to the cytoplasm. Its function is as follows. Ribosomal protein P0 is the functional equivalent of E.coli protein L10. The polypeptide is Large ribosomal subunit protein uL10 (RPLP0) (Oryctolagus cuniculus (Rabbit)).